A 575-amino-acid chain; its full sequence is Mitochondrial 2-methylisocitrate lyase ICL2 (575 aa).

Residue Cys238 is part of the active site.

This sequence belongs to the isocitrate lyase/PEP mutase superfamily. Isocitrate lyase family.

Its subcellular location is the mitochondrion matrix. The enzyme catalyses (2S,3R)-3-hydroxybutane-1,2,3-tricarboxylate = pyruvate + succinate. Its pathway is organic acid metabolism; propanoate degradation. In terms of biological role, catalyzes the formation of pyruvate and succinate from 2-methylisocitrate during the metabolism of endogenous propionyl-CoA. Does not act on isocitrate. The chain is Mitochondrial 2-methylisocitrate lyase ICL2 (ICL2) from Saccharomyces cerevisiae (strain ATCC 204508 / S288c) (Baker's yeast).